The following is a 146-amino-acid chain: Large ribosomal subunit protein uL11 (146 aa).

Belongs to the universal ribosomal protein uL11 family. In terms of assembly, part of the ribosomal stalk of the 50S ribosomal subunit. Interacts with L10 and the large rRNA to form the base of the stalk. L10 forms an elongated spine to which L12 dimers bind in a sequential fashion forming a multimeric L10(L12)X complex. Post-translationally, one or more lysine residues are methylated.

Forms part of the ribosomal stalk which helps the ribosome interact with GTP-bound translation factors. The polypeptide is Large ribosomal subunit protein uL11 (Treponema pallidum subsp. pallidum (strain SS14)).